The sequence spans 472 residues: FAD-dependent monooxygenase ltmM (472 aa).

The chain crosses the membrane as a helical span at residues 7–27 (VIIVGGSVAGLSLAHCLEKIG). FAD-binding residues include Glu34, Gly48, and Arg107. N-linked (GlcNAc...) asparagine glycosylation occurs at Asn186. FAD-binding residues include Asp306 and Ala319. Residues 450-470 (IVYALYLVAAAAFILYCLSSL) form a helical membrane-spanning segment.

This sequence belongs to the paxM FAD-dependent monooxygenase family. Requires FAD as cofactor.

The protein resides in the membrane. It participates in secondary metabolite biosynthesis. Its function is as follows. FAD-dependent monooxygenase; part of the gene cluster that mediates the biosynthesis of lolitrems, indole-diterpene mycotoxins that are potent tremorgens in mammals, and are synthesized by clavicipitaceous fungal endophytes in association with their grass hosts. The geranylgeranyl diphosphate (GGPP) synthase ltmG is proposed to catalyze the first step in lolitrem biosynthesis. LtmG catalyzes a series of iterative condensations of isopentenyl diphosphate (IPP) with dimethylallyl diphosphate (DMAPP), geranyl diphosphate (GPP), and farnesyl diphosphate (FPP), to form GGPP. GGPP then condenses with indole-3-glycerol phosphate to form 3-geranylgeranylindole, an acyclic intermediate, to be incorporated into paxilline. Either ltmG or ltmC could be responsible for this step, as both are putative prenyl transferases. The FAD-dependent monooxygenase ltmM then catalyzes the epoxidation of the two terminal alkenes of the geranylgeranyl moiety, which is subsequently cyclized by ltmC, to paspaline. The cytochrome P450 monooxygenases ltmQ and ltmP can sequentially oxidize paspaline to terpendole E and terpendole F. Alternatively, ltmP converts paspaline to an intermediate which is oxidized by ltmQ to terpendole F. LtmF, ltmK, ltmE and ltmJ appear to be unique to the epichloe endophytes. The prenyltransferase ltmF is involved in the 27-hydroxyl-O-prenylation. The cytochrome P450 monooxygenase ltmK is required for the oxidative acetal ring formation. The multi-functional prenyltransferase ltmE is required for C20- and C21-prenylations of the indole ring of paspalanes and acts together with the cytochrome P450 monooxygenase ltmJ to yield lolitremanes by multiple oxidations and ring closures. The stereoisomer pairs of lolitriol and lolitrem N or lolitrem B and lolitrem F may be attributed to variations in the way in which ring closure can occur under the action of ltmJ. While the major product of this pathway is lolitrem B, the prenyl transferases and cytochrome P450 monooxygenases identified in this pathway have a remarkable versatility in their regio- and stereo-specificities to generate a diverse range of metabolites that are products of a metabolic grid rather than a linear pathway. The sequence is that of FAD-dependent monooxygenase ltmM (ltmM) from Epichloe festucae (strain Fl1).